We begin with the raw amino-acid sequence, 97 residues long: U-scoloptoxin(10)-Ssd2a (97 aa).

The signal sequence occupies residues 1–23 (MNKSMLIFFTILFLTYIIEEKEA).

Contains 3 disulfide bonds. Expressed by the venom gland.

The protein localises to the secreted. The protein is U-scoloptoxin(10)-Ssd2a of Scolopendra dehaani (Thai centipede).